Here is a 909-residue protein sequence, read N- to C-terminus: Coatomer subunit beta'-3 (909 aa).

9 WD repeats span residues 13–52 (QRSE…ITKS), 55–94 (VTEL…KVKV), 97–136 (AHSD…ACTQ), 140–180 (GHSH…PNFT), 183–224 (AHQK…CVQT), 227–266 (GHTH…LENT), 269–309 (YGLE…ASMD), 351–390 (TCDL…RSFG), and 461–501 (QIDV…SHFD). A disordered region spans residues 862 to 909 (EENGHVENEGDEEEQQEEEVNEEEGVVDADSTDGAVLVNGSEVLTPHP). The span at 870 to 892 (EGDEEEQQEEEVNEEEGVVDADS) shows a compositional bias: acidic residues.

This sequence belongs to the WD repeat COPB2 family. As to quaternary structure, oligomeric complex that consists of at least the alpha, beta, beta', gamma, delta, epsilon and zeta subunits.

The protein resides in the cytoplasm. Its subcellular location is the golgi apparatus membrane. It localises to the cytoplasmic vesicle. It is found in the COPI-coated vesicle membrane. Its function is as follows. The coatomer is a cytosolic protein complex that binds to dilysine motifs and reversibly associates with Golgi non-clathrin-coated vesicles, which further mediate biosynthetic protein transport from the ER, via the Golgi up to the trans Golgi network. Coatomer complex is required for budding from Golgi membranes, and is essential for the retrograde Golgi-to-ER transport of dilysine-tagged proteins. The sequence is that of Coatomer subunit beta'-3 from Arabidopsis thaliana (Mouse-ear cress).